A 198-amino-acid chain; its full sequence is 7-methyl-GTP pyrophosphatase (198 aa).

Asp75 functions as the Proton acceptor in the catalytic mechanism.

Belongs to the Maf family. YceF subfamily. A divalent metal cation serves as cofactor.

It localises to the cytoplasm. It catalyses the reaction N(7)-methyl-GTP + H2O = N(7)-methyl-GMP + diphosphate + H(+). Nucleoside triphosphate pyrophosphatase that hydrolyzes 7-methyl-GTP (m(7)GTP). May have a dual role in cell division arrest and in preventing the incorporation of modified nucleotides into cellular nucleic acids. The sequence is that of 7-methyl-GTP pyrophosphatase from Bartonella henselae (strain ATCC 49882 / DSM 28221 / CCUG 30454 / Houston 1) (Rochalimaea henselae).